The sequence spans 816 residues: Phosphatidylinositol 4-kinase beta (816 aa).

Disordered stretches follow at residues 1 to 30 (MGDMVVEPATLKPTSEPTPSPSGNNGGSLL), 101 to 120 (EDEMGAGVASGTAKGARRRR), and 250 to 318 (RKRE…SFSS). At Gly-2 the chain carries N-acetylglycine. An interaction with ACBD3 region spans residues 2 to 68 (GDMVVEPATL…VKLLHGGVAI (67 aa)). Low complexity predominate over residues 10–30 (TLKPTSEPTPSPSGNNGGSLL). In terms of domain architecture, PIK helical spans 52 to 242 (CQEVLEKVKL…GTKLRKLILS (191 aa)). Ser-258 carries the post-translational modification Phosphoserine. A Phosphothreonine modification is found at Thr-263. Ser-266, Ser-275, Ser-277, Ser-284, and Ser-294 each carry phosphoserine. Polar residues-rich tracts occupy residues 278-297 (DATASISLSSNLKRTASNPK) and 306-318 (SSSTESIDNSFSS). Ser-428 carries the phosphoserine modification. Phosphothreonine is present on Thr-438. Ser-511 carries the post-translational modification Phosphoserine. Phosphothreonine occurs at positions 517 and 519. Residues 535–801 (EPWQEKVRRI…MVDGSMRSIT (267 aa)) enclose the PI3K/PI4K catalytic domain. The tract at residues 541–547 (VRRIREG) is G-loop. The segment at 668–676 (QVKDRHNGN) is catalytic loop. Residues 687-711 (HIDFGFILSSSPRNLGFETSAFKLT) are activation loop.

The protein belongs to the PI3/PI4-kinase family. Type III PI4K subfamily. In terms of assembly, interacts with ARF1 and ARF3 in the Golgi complex, but not with ARF4, ARF5 or ARF6. Interacts with NCS1/FREQ in a calcium-independent manner. Interacts with CALN1/CABP8 and CALN2/CABP7; in a calcium-dependent manner; this interaction competes with NCS1/FREQ binding. Interacts with ACBD3. Interacts with ARMH3, YWHAB, YWHAE, YWHAG, YWHAH, YWHAQ, YWHAZ and SFN. Interacts with GGA2 (via VHS domain); the interaction is important for PI4KB location at the Golgi apparatus membrane. Interacts with ATG9A. The cofactor is Mg(2+). Mn(2+) is required as a cofactor.

It localises to the endomembrane system. Its subcellular location is the mitochondrion outer membrane. The protein resides in the rough endoplasmic reticulum membrane. The protein localises to the golgi apparatus. It is found in the golgi apparatus membrane. The catalysed reaction is a 1,2-diacyl-sn-glycero-3-phospho-(1D-myo-inositol) + ATP = a 1,2-diacyl-sn-glycero-3-phospho-(1D-myo-inositol 4-phosphate) + ADP + H(+). Inhibited by wortmannin. Increased kinase activity upon interaction with NCS1/FREQ. Functionally, phosphorylates phosphatidylinositol (PI) in the first committed step in the production of the second messenger inositol-1,4,5,-trisphosphate (PIP). May regulate Golgi disintegration/reorganization during mitosis, possibly via its phosphorylation. Involved in Golgi-to-plasma membrane trafficking. May play an important role in the inner ear development. This is Phosphatidylinositol 4-kinase beta (Pi4kb) from Mus musculus (Mouse).